Reading from the N-terminus, the 289-residue chain is MWFQLKIEHCPNDKIEEITEELEEYGALSITLTDKNDNPVLEPEPGTTPLWPEVIIHALFAQAEEAQYVREQLVAKRPSLHCSLELLADKNWERAWMDDFRPQRFGNRLWVCPTWLPPPEPDAVNLMLDPGLAFGTGTHATTSLCLTWLEQADLKNKSIIDYGCGSGILSLAAIKLGAKHVYAVDIDNQALQATQSNAHANHITESQLSISTPEALQNPVHLIIANILLAPLISLKERFHQLLPSGAHLVTSGILEEQAPLLIDAYDSAFTHIATEYCEGWSLLVFTSK.

Residues T142, G163, D185, and N226 each contribute to the S-adenosyl-L-methionine site.

This sequence belongs to the methyltransferase superfamily. PrmA family.

The protein resides in the cytoplasm. The catalysed reaction is L-lysyl-[protein] + 3 S-adenosyl-L-methionine = N(6),N(6),N(6)-trimethyl-L-lysyl-[protein] + 3 S-adenosyl-L-homocysteine + 3 H(+). Functionally, methylates ribosomal protein L11. In Legionella pneumophila (strain Paris), this protein is Ribosomal protein L11 methyltransferase.